Here is a 314-residue protein sequence, read N- to C-terminus: DNA-directed RNA polymerase subunit alpha (314 aa).

An alpha N-terminal domain (alpha-NTD) region spans residues M1–T228. The alpha C-terminal domain (alpha-CTD) stretch occupies residues E246–D314.

Belongs to the RNA polymerase alpha chain family. Homodimer. The RNAP catalytic core consists of 2 alpha, 1 beta, 1 beta' and 1 omega subunit. When a sigma factor is associated with the core the holoenzyme is formed, which can initiate transcription.

It carries out the reaction RNA(n) + a ribonucleoside 5'-triphosphate = RNA(n+1) + diphosphate. Functionally, DNA-dependent RNA polymerase catalyzes the transcription of DNA into RNA using the four ribonucleoside triphosphates as substrates. This is DNA-directed RNA polymerase subunit alpha from Bacillus cytotoxicus (strain DSM 22905 / CIP 110041 / 391-98 / NVH 391-98).